A 1253-amino-acid chain; its full sequence is MSCTASYAGMTTPVKDKEGHGIPCLQPIDVVECTYQYFTKSRNKLSLRVGDLIYVLTKGSNGWWDGVLIRHSANNNNNNSLILDRGWFPPSFTRSILNELHGVPDIGNELEIFQAGLNLKLELSSNPVILSLEDFLDCCRDIEFKEQLAWSPTPVHERKGCCELLYYNQDLDVYCRTLPYLPQNQVETVNDYSSFPAISKIAGKKMPITSSPDLFYLNDCDVVYWYDLTRLVCHYVNLTERDLLANEREKFLTSLDLLTAQITYVYMLFRNLRLVEDSFKKTLKKLIYTLSRFSINANIWFHSTSFEEREAIASQKDPERRSPLLQSILGTFQKFHFLLRLLHFLSNPNELTILPQLTPRFFKDSFNTISWNNPFLRTVFNQHMSMTLPRQMIKAVAGASGIVAENIDEIPASKQGTFISSETSHHSPSAPFQRRRRGTIFSNVSGSSDESDTIWSKRKKPYPLNEETLSLVRARKKQLDGKLKQMIKSANEYLSNTANFSKMLNFEMNFKTYEEVSGTIPIIDILENLDLTIFLNLRELGDENRVFDEDVAIGDEDKEFLKHSLSSLSYILSDYFNMKQYFHDVVVKFIIVAQHLTLEDPFVFSPMQNDLPTGYYEPMKPSSLNLDNAKDKKNGSQNTDIQEEEDEYEPDPDSLILFHNLINQDSDFNDLKFFNLAHVFKKSCDDYFDVLKLAIEFVNQLILERENLLNYAARMMKNNITELLLRGEEGYGSYDGGETAEKSDTNAVYADSDTKDNDEWRDSQVKLPRYLQREYDSELIWGPIVRIKGGSKHALISYLTDNEKKDLFFNITFLITFRSIFTTTEFLSYLISQYNLDPPEDLCFEEYNEWVTKKLIPVKCRVVEIMTTFFKQYWFPGYDEPDLATLNLDYFAQVAIKENITGSVELLKEVNQKFKLGNIQEATAPMKTLDQQICQDHYSGTLYSTTESILAVDPVLFATQLTILEHEIYCEITIFDCLQKIWKNKYTKSYGASPGLNEFISFANKLTNFISYSVVKEADKSKRAKLLSHFIFIAEYCRKFNNFSSMTAIISALYSSPIYRLEKTWQAVIPQTRDLLQSLNKLMDPKKNFINYRNELKSLHSAPCVPFFGVYLSDLTFTDSGNPDYLVLEHGLKGVHDEKKYINFNKRSRLVDILQEIIYFKKTHYDFTKDRTVIECISNSLENIPHIEKQYQLSLIIEPKPRKKVVPNSNSNNKSQEKSRDDQTDEGKTSTKKDRFPKFQLHKTKKKAPKVSK.

The SH3 domain occupies 26-98 (QPIDVVECTY…PPSFTRSILN (73 aa)). The disordered stretch occupies residues 624–649 (LNLDNAKDKKNGSQNTDIQEEEDEYE). Positions 782 to 914 (GPIVRIKGGS…ELLKEVNQKF (133 aa)) constitute an N-terminal Ras-GEF domain. The Ras-GEF domain maps to 952–1199 (VDPVLFATQL…QYQLSLIIEP (248 aa)). The disordered stretch occupies residues 1202 to 1253 (RKKVVPNSNSNNKSQEKSRDDQTDEGKTSTKKDRFPKFQLHKTKKKAPKVSK). The span at 1215–1237 (SQEKSRDDQTDEGKTSTKKDRFP) shows a compositional bias: basic and acidic residues. Residues 1240–1253 (QLHKTKKKAPKVSK) show a composition bias toward basic residues.

Functionally, promotes the exchange of Ras-bound GDP by GTP. This chain is Guanine nucleotide exchange factor SDC25 (SDC25), found in Saccharomyces cerevisiae (Baker's yeast).